Consider the following 159-residue polypeptide: Ascorbate-specific PTS system EIIA component (159 aa).

The 144-residue stretch at 9–152 folds into the PTS EIIA type-2 domain; that stretch reads VLKQHHTVRL…TSLFAVIDRV (144 aa). Residue His-71 is the Tele-phosphohistidine intermediate of the active site. His-71 is modified (phosphohistidine).

The protein localises to the cytoplasm. In terms of biological role, the phosphoenolpyruvate-dependent sugar phosphotransferase system (sugar PTS), a major carbohydrate active transport system, catalyzes the phosphorylation of incoming sugar substrates concomitantly with their translocation across the cell membrane. The enzyme II UlaABC PTS system is involved in ascorbate transport. In Mycoplasma pneumoniae (strain ATCC 29342 / M129 / Subtype 1) (Mycoplasmoides pneumoniae), this protein is Ascorbate-specific PTS system EIIA component (ulaC).